Consider the following 320-residue polypeptide: Heterogeneous nuclear ribonucleoprotein A1 (320 aa).

Position 1 is an N-acetylmethionine (methionine 1). Serine 2 is modified (N-acetylserine; in Heterogeneous nuclear ribonucleoprotein A1, N-terminally processed). Serine 2 is subject to Phosphoserine. Lysine 3 is subject to N6-acetyllysine; alternate. A Glycyl lysine isopeptide (Lys-Gly) (interchain with G-Cter in SUMO2); alternate cross-link involves residue lysine 3. A phosphoserine mark is found at serine 4 and serine 6. The segment at 4-94 (SESPKEPEQL…EPKRAVSRED (91 aa)) is globular A domain. Lysine 8 is covalently cross-linked (Glycyl lysine isopeptide (Lys-Gly) (interchain with G-Cter in SUMO2)). RRM domains follow at residues 14-97 (RKLF…DSQR) and 105-184 (KKIF…LSKQ). Phosphoserine is present on serine 22. A Glycyl lysine isopeptide (Lys-Gly) (interchain with G-Cter in SUMO2) cross-link involves residue lysine 78. Residues 95–185 (SQRPGAHLTV…EVRKALSKQE (91 aa)) form a globular B domain region. A Glycyl lysine isopeptide (Lys-Gly) (interchain with G-Cter in SUMO) cross-link involves residue lysine 113. Glycyl lysine isopeptide (Lys-Gly) (interchain with G-Cter in SUMO2) cross-links involve residues lysine 179 and lysine 183. Residues 182–216 (SKQEMASASSSQRGRSGSGNFGGGRGGGFGGNDNF) are disordered. Residue serine 192 is modified to Phosphoserine; by MKNK2. Asymmetric dimethylarginine; alternate is present on arginine 194. Arginine 194 carries the post-translational modification Dimethylated arginine; alternate. Position 194 is an omega-N-methylarginine; alternate (arginine 194). The span at 197 to 216 (SGSGNFGGGRGGGFGGNDNF) shows a compositional bias: gly residues. The residue at position 199 (serine 199) is a Phosphoserine. Asymmetric dimethylarginine; alternate is present on residues arginine 206, arginine 218, arginine 225, and arginine 232. Residue arginine 206 is modified to Dimethylated arginine; alternate. 4 positions are modified to omega-N-methylarginine; alternate: arginine 206, arginine 218, arginine 225, and arginine 232. The segment at 218 to 240 (RGGNFSGRGGFGGSRGGGGYGGS) is RNA-binding RGG-box. The residue at position 225 (arginine 225) is a Dimethylated arginine; alternate. The segment at 268–305 (NQSSNFGPMKGGNFGGRSSGPYGGGGQYFAKPRNQGGY) is nuclear targeting sequence. The interval 274 to 320 (GPMKGGNFGGRSSGPYGGGGQYFAKPRNQGGYGGSSSSSSYGSGRRF) is disordered. Over residues 276 to 294 (MKGGNFGGRSSGPYGGGGQ) the composition is skewed to gly residues. Arginine 284 carries the omega-N-methylarginine modification. At serine 285 the chain carries Phosphoserine. N6-acetyllysine; alternate is present on lysine 298. A Glycyl lysine isopeptide (Lys-Gly) (interchain with G-Cter in SUMO2); alternate cross-link involves residue lysine 298. The residue at position 300 (arginine 300) is an Omega-N-methylarginine. The segment covering 308–320 (SSSSSSYGSGRRF) has biased composition (low complexity). Position 309 is a phosphoserine (serine 309). Residues serine 310, serine 311, and serine 312 each carry the phosphoserine; by MKNK2 modification. 2 positions are modified to phosphoserine: serine 313 and serine 316. Arginine 318 bears the Omega-N-methylarginine mark.

As to quaternary structure, identified in the spliceosome C complex. Identified in a IGF2BP1-dependent mRNP granule complex containing untranslated mRNAs. Interacts with SEPT6. Interacts with C9orf72. Interacts with KHDRBS1. Interacts with UBQLN2. Interacts with PPIA/CYPA. In terms of processing, sumoylated.

It is found in the nucleus. The protein resides in the cytoplasm. Its function is as follows. Involved in the packaging of pre-mRNA into hnRNP particles, transport of poly(A) mRNA from the nucleus to the cytoplasm and modulation of splice site selection. Plays a role in the splicing of pyruvate kinase PKM by binding repressively to sequences flanking PKM exon 9, inhibiting exon 9 inclusion and resulting in exon 10 inclusion and production of the PKM M2 isoform. Binds to the IRES and thereby inhibits the translation of the apoptosis protease activating factor APAF1. May bind to specific miRNA hairpins. This is Heterogeneous nuclear ribonucleoprotein A1 (Hnrnpa1) from Mus musculus (Mouse).